Consider the following 352-residue polypeptide: Rhodopsin (352 aa).

The Extracellular segment spans residues 1–36; the sequence is MNGTEGPFFYIPMVNTTGIVRSPYEYPQYYLVNPAA. Residues Asn2 and Asn15 are each glycosylated (N-linked (GlcNAc...) asparagine). A helical membrane pass occupies residues 37-61; sequence YAALGAYMFFLILTGFPINFLTLYV. The Cytoplasmic segment spans residues 62–73; sequence TLEHKKLRTALN. A helical membrane pass occupies residues 74 to 96; it reads LILLNLAVADLFMVFGGFTTTMY. Residues 97–110 lie on the Extracellular side of the membrane; it reads TSMHGYFVLGRLGC. Cys110 and Cys187 form a disulfide bridge. A helical transmembrane segment spans residues 111 to 133; it reads NVEGFFATLGGEIALWSLVVLAV. Positions 134–136 match the 'Ionic lock' involved in activated form stabilization motif; sequence ERW. The Cytoplasmic portion of the chain corresponds to 134-152; that stretch reads ERWVVVCKPISNFRFTENH. A helical membrane pass occupies residues 153–173; that stretch reads AIMGVAFSWIMAATCAVPPLV. At 174-202 the chain is on the extracellular side; it reads GWSRYIPEGMQCSCGVDYYTRAEGFNNES. A helical membrane pass occupies residues 203–224; sequence FVIYMFIVHFLAPLIVIFFCYG. Residues 225–252 lie on the Cytoplasmic side of the membrane; the sequence is RLLCAVKEAAAAQQESETTQRAEREVTR. A helical transmembrane segment spans residues 253-274; that stretch reads MVIIMVIGFLTSWLPYASVAWY. Residues 275-286 lie on the Extracellular side of the membrane; it reads IFTHQGTEFGPL. The helical transmembrane segment at 287 to 308 threads the bilayer; sequence FMTIPAFFAKSSALYNPMIYIC. At Lys296 the chain carries N6-(retinylidene)lysine. At 309-352 the chain is on the cytoplasmic side; sequence MNKQFRHCMITTLCCGKNPFEEEEGASTTKTEASSVSSSSVSPA. 2 S-palmitoyl cysteine lipidation sites follow: Cys322 and Cys323. Residues 331–352 are disordered; that stretch reads EEGASTTKTEASSVSSSSVSPA. Over residues 342 to 352 the composition is skewed to low complexity; it reads SSVSSSSVSPA.

This sequence belongs to the G-protein coupled receptor 1 family. Opsin subfamily. In terms of processing, phosphorylated on some or all of the serine and threonine residues present in the C-terminal region. Post-translationally, contains one covalently linked retinal chromophore.

It localises to the membrane. It is found in the cell projection. Its subcellular location is the cilium. The protein resides in the photoreceptor outer segment. Photoreceptor required for image-forming vision at low light intensity. While most salt water fish species use retinal as chromophore, most freshwater fish use 3-dehydroretinal, or a mixture of retinal and 3-dehydroretinal. Light-induced isomerization of 11-cis to all-trans retinal triggers a conformational change that activates signaling via G-proteins. Subsequent receptor phosphorylation mediates displacement of the bound G-protein alpha subunit by arrestin and terminates signaling. The protein is Rhodopsin (rho) of Pomatoschistus minutus (Sand goby).